The primary structure comprises 172 residues: Immune protein Tsi1 (172 aa).

The N-terminal stretch at 1 to 19 is a signal peptide; the sequence is MKLLAGSFAALFLSLSAQA. 3 disulfide bridges follow: Cys-22/Cys-167, Cys-79/Cys-121, and Cys-147/Cys-155.

Forms a heterotetramer with Tse1 consisting of two Tse1 dimers and two Tsi1 dimers. Formation of the complex inactivates Tse1 enzymatic activity.

Immunity protein that plays a role in preventing early activation of toxin Tse1. Binds to a large surface of Tse1 and thereby occludes the active site to specifically inhibits enzyme activity by forming a hydrogen bond with the catalytic diad. This is Immune protein Tsi1 from Pseudomonas aeruginosa (strain ATCC 15692 / DSM 22644 / CIP 104116 / JCM 14847 / LMG 12228 / 1C / PRS 101 / PAO1).